The chain runs to 360 residues: Photosystem II protein D1 (360 aa).

A run of 3 helical transmembrane segments spans residues 29 to 46 (YIGW…SAIA), 118 to 133 (HFLI…EWEL), and 142 to 156 (WICV…AATA). His-118 is a chlorophyll a binding site. Tyr-126 is a binding site for pheophytin a. [CaMn4O5] cluster contacts are provided by Asp-170 and Glu-189. The helical transmembrane segment at 197 to 218 (FHMLGVAGVFGGSLFSAMHGSL) threads the bilayer. His-198 contributes to the chlorophyll a binding site. A quinone contacts are provided by residues His-215 and 264–265 (SF). His-215 is a Fe cation binding site. His-272 serves as a coordination point for Fe cation. A helical membrane pass occupies residues 274-288 (FLAAWPVIGIWFTAL). Positions 332, 333, 342, and 344 each coordinate [CaMn4O5] cluster. A propeptide spanning residues 345-360 (AGDVAPVALTAPPING) is cleaved from the precursor.

The protein belongs to the reaction center PufL/M/PsbA/D family. In terms of assembly, PSII is composed of 1 copy each of membrane proteins PsbA, PsbB, PsbC, PsbD, PsbE, PsbF, PsbH, PsbI, PsbJ, PsbK, PsbL, PsbM, PsbT, PsbX, PsbY, PsbZ, Psb30/Ycf12, peripheral proteins PsbO, CyanoQ (PsbQ), PsbU, PsbV and a large number of cofactors. It forms dimeric complexes. It depends on The D1/D2 heterodimer binds P680, chlorophylls that are the primary electron donor of PSII, and subsequent electron acceptors. It shares a non-heme iron and each subunit binds pheophytin, quinone, additional chlorophylls, carotenoids and lipids. D1 provides most of the ligands for the Mn4-Ca-O5 cluster of the oxygen-evolving complex (OEC). There is also a Cl(-1) ion associated with D1 and D2, which is required for oxygen evolution. The PSII complex binds additional chlorophylls, carotenoids and specific lipids. as a cofactor. Tyr-161 forms a radical intermediate that is referred to as redox-active TyrZ, YZ or Y-Z. In terms of processing, C-terminally processed by CtpA; processing is essential to allow assembly of the oxygen-evolving complex and thus photosynthetic growth.

The protein localises to the cellular thylakoid membrane. It catalyses the reaction 2 a plastoquinone + 4 hnu + 2 H2O = 2 a plastoquinol + O2. Its function is as follows. Photosystem II (PSII) is a light-driven water:plastoquinone oxidoreductase that uses light energy to abstract electrons from H(2)O, generating O(2) and a proton gradient subsequently used for ATP formation. It consists of a core antenna complex that captures photons, and an electron transfer chain that converts photonic excitation into a charge separation. The D1/D2 (PsbA/PsbD) reaction center heterodimer binds P680, the primary electron donor of PSII as well as several subsequent electron acceptors. In Trichormus azollae (Anabaena azollae), this protein is Photosystem II protein D1.